Reading from the N-terminus, the 294-residue chain is Transmembrane protein 178B (294 aa).

An N-terminal signal peptide occupies residues 1–23; it reads MAAGRLLLYTGLSLALCALGMLA. Residues Asn-148 and Asn-152 are each glycosylated (N-linked (GlcNAc...) asparagine). 3 consecutive transmembrane segments (helical) span residues 172 to 192, 206 to 226, and 252 to 272; these read AGFM…GVLG, LLFL…VAGI, and MFCA…CTLA.

It belongs to the TMEM178 family.

It localises to the membrane. The sequence is that of Transmembrane protein 178B (TMEM178B) from Homo sapiens (Human).